A 182-amino-acid polypeptide reads, in one-letter code: Putative manganese efflux pump MntP (182 aa).

6 helical membrane passes run 7-27 (IISIILLAIGLSMDGFSVSLG), 38-58 (IAYIGLTIGFLHMLMPLAGML), 71-91 (TSFAGGVLLFLIGAHMFFSAF), 106-126 (LWIIAFSVSLDSFTVGLGLGI), 131-151 (IFVTLFAFGIVSCFLTWLGML), and 159-179 (FLGVYSELLGGSILCGFGIFI).

The protein belongs to the MntP (TC 9.B.29) family.

Its subcellular location is the cell membrane. Its function is as follows. Probably functions as a manganese efflux pump. The polypeptide is Putative manganese efflux pump MntP (Oceanobacillus iheyensis (strain DSM 14371 / CIP 107618 / JCM 11309 / KCTC 3954 / HTE831)).